The sequence spans 373 residues: Phosphoserine aminotransferase (373 aa).

Arg41 is an L-glutamate binding site. Pyridoxal 5'-phosphate contacts are provided by residues 75–76 (GT), Trp101, Thr152, Asp172, and Gln195. Lys196 bears the N6-(pyridoxal phosphate)lysine mark. Residue 236-237 (NT) participates in pyridoxal 5'-phosphate binding.

This sequence belongs to the class-V pyridoxal-phosphate-dependent aminotransferase family. SerC subfamily. Homodimer. Requires pyridoxal 5'-phosphate as cofactor.

Its subcellular location is the cytoplasm. It catalyses the reaction O-phospho-L-serine + 2-oxoglutarate = 3-phosphooxypyruvate + L-glutamate. The catalysed reaction is 4-(phosphooxy)-L-threonine + 2-oxoglutarate = (R)-3-hydroxy-2-oxo-4-phosphooxybutanoate + L-glutamate. The protein operates within amino-acid biosynthesis; L-serine biosynthesis; L-serine from 3-phospho-D-glycerate: step 2/3. Catalyzes the reversible conversion of 3-phosphohydroxypyruvate to phosphoserine and of 3-hydroxy-2-oxo-4-phosphonooxybutanoate to phosphohydroxythreonine. The chain is Phosphoserine aminotransferase from Lactobacillus helveticus (strain DPC 4571).